A 545-amino-acid chain; its full sequence is RNA-directed RNA polymerase beta chain (545 aa).

Positions 243-373 constitute a RdRp catalytic domain; sequence RLAQQGSVDG…PNLRKTFVSG (131 aa).

As to quaternary structure, part of the viral RNA-dependent RNA polymerase complex, the other subunits are probably the host ribosomal protein S1, EF-Tu and EF-Ts.

It carries out the reaction RNA(n) + a ribonucleoside 5'-triphosphate = RNA(n+1) + diphosphate. Functionally, this is the catalytic subunit of the viral RNA-dependent RNA polymerase complex. This complex is involved in viral RNA replication that produces (+)-stranded genomes via a complementary, (-)-stranded intermediate. The chain is RNA-directed RNA polymerase beta chain from Escherichia coli (Bacteriophage MS2).